The following is a 274-amino-acid chain: tRNA-cytidine(32) 2-sulfurtransferase (274 aa).

Residues 40 to 45 (SGGKDS) carry the PP-loop motif motif. [4Fe-4S] cluster-binding residues include C115, C118, and C206.

This sequence belongs to the TtcA family. Homodimer. It depends on Mg(2+) as a cofactor. The cofactor is [4Fe-4S] cluster.

The protein resides in the cytoplasm. The catalysed reaction is cytidine(32) in tRNA + S-sulfanyl-L-cysteinyl-[cysteine desulfurase] + AH2 + ATP = 2-thiocytidine(32) in tRNA + L-cysteinyl-[cysteine desulfurase] + A + AMP + diphosphate + H(+). It participates in tRNA modification. Catalyzes the ATP-dependent 2-thiolation of cytidine in position 32 of tRNA, to form 2-thiocytidine (s(2)C32). The sulfur atoms are provided by the cysteine/cysteine desulfurase (IscS) system. The chain is tRNA-cytidine(32) 2-sulfurtransferase from Azotobacter vinelandii (strain DJ / ATCC BAA-1303).